The primary structure comprises 34 residues: Peptide 9797 (34 aa).

In terms of tissue distribution, expressed by the venom gland.

The protein resides in the secreted. The protein is Peptide 9797 of Tityus stigmurus (Brazilian scorpion).